Consider the following 859-residue polypeptide: Low-density lipoprotein receptor-related protein 12 (859 aa).

A signal peptide spans 1 to 32; sequence MARRWSTKESPRWRSALLLLFLAGVYGNGALA. Topologically, residues 33 to 492 are extracellular; sequence EHSENVHISG…ENCPVIVPTR (460 aa). 2 cysteine pairs are disulfide-bonded: Cys47–Cys76 and Cys103–Cys122. The region spanning 47-159 is the CUB 1 domain; the sequence is CGETPEQIRA…KGFRLAYFSG (113 aa). N-linked (GlcNAc...) asparagine glycosylation is present at Asn75. A glycan (N-linked (GlcNAc...) asparagine) is linked at Asn146. LDL-receptor class A domains follow at residues 165 to 201 and 214 to 255; these read NCACDQFRCGNGKCIPEAWKCNNMDECGDSSDEEICA and PCAY…IDCD. Intrachain disulfides connect Cys166/Cys178, Cys173/Cys191, Cys185/Cys200, Cys215/Cys232, Cys222/Cys245, Cys239/Cys254, and Cys259/Cys285. The region spanning 259 to 372 is the CUB 2 domain; it reads CGQWLKYFYG…RGFNATYQVD (114 aa). Residues Asn284 and Asn366 are each glycosylated (N-linked (GlcNAc...) asparagine). 3 LDL-receptor class A domains span residues 374–411, 412–449, and 450–486; these read FCLPWEIPCGGNWGCYTEQQRCDGYWHCPNGRDEINCT, MCQKEEFPCSRNGVCYPRSDRCNYQNHCPNGSDEKNCF, and FCQPGNFHCKNNRCVFESWVCDSQDDCGDGSDEENCP. Disulfide bonds link Cys375/Cys388, Cys382/Cys401, Cys395/Cys410, Cys413/Cys426, Cys420/Cys439, Cys433/Cys448, Cys451/Cys463, Cys458/Cys476, and Cys470/Cys485. N-linked (GlcNAc...) asparagine glycosylation is present at Asn409. An N-linked (GlcNAc...) asparagine glycan is attached at Asn441. Residues 493–513 form a helical membrane-spanning segment; that stretch reads VITAAVIGSLICGLLLVIALG. Over 514–859 the chain is Cytoplasmic; the sequence is CTCKLYSLRM…TSDDEALLLC (346 aa). Disordered regions lie at residues 623–678, 693–723, 748–770, and 802–823; these read ADGD…LPQK, ASSSTQSTRGGHADNGRDVTSVEPPSVSPAR, SSVSQNQSPLRQLDNGVSGREDD, and QGQGLRQPYNATNPGVRPSNRD. Composition is skewed to polar residues over residues 748–757 and 802–814; these read SSVSQNQSPL and QGQGLRQPYNATN.

The protein belongs to the LDLR family. As to quaternary structure, may interact with RACK1, ZFYVE9 and NMRK2.

It localises to the membrane. The protein resides in the coated pit. In terms of biological role, probable receptor, which may be involved in the internalization of lipophilic molecules and/or signal transduction. May act as a tumor suppressor. The polypeptide is Low-density lipoprotein receptor-related protein 12 (LRP12) (Pongo abelii (Sumatran orangutan)).